The sequence spans 91 residues: Elongation factor 1-beta (91 aa).

It belongs to the EF-1-beta/EF-1-delta family.

Promotes the exchange of GDP for GTP in EF-1-alpha/GDP, thus allowing the regeneration of EF-1-alpha/GTP that could then be used to form the ternary complex EF-1-alpha/GTP/AAtRNA. The polypeptide is Elongation factor 1-beta (Caldivirga maquilingensis (strain ATCC 700844 / DSM 13496 / JCM 10307 / IC-167)).